The primary structure comprises 859 residues: Autoinducer 2 sensor kinase/phosphatase LuxQ (859 aa).

The next 2 helical transmembrane spans lie at 15–35 and 280–300; these read ATLITKIIILVLAPIILGIFI and IQHILAMLASIIGMIMIALMS. The Histidine kinase domain occupies 489–711; that stretch reads KMSHEIRTPI…TFVITLPVKD (223 aa). His492 is subject to Phosphohistidine; by autocatalysis. One can recognise a Response regulatory domain in the interval 736–851; that stretch reads KVLLVEDNHT…ALHEAFVDFK (116 aa). Asp785 bears the 4-aspartylphosphate mark.

In terms of assembly, binds the complex formed by AI-2 and LuxP.

The protein resides in the cell inner membrane. It carries out the reaction ATP + protein L-histidine = ADP + protein N-phospho-L-histidine.. Its function is as follows. At low cell density, in absence of AI-2 (autoinducer 2), LuxQ has a kinase activity and autophosphorylates on a histidine residue. The phosphoryl group is then transferred to an aspartate residue in the response regulator domain. The phosphoryl group is transferred to LuxU, and ultimately to LuxO. At high cell density, in the presence of AI-2, the kinase activity is inactivated, and the response regulator domain has a phosphatase activity. The protein is Autoinducer 2 sensor kinase/phosphatase LuxQ (luxQ) of Vibrio harveyi (Beneckea harveyi).